A 346-amino-acid polypeptide reads, in one-letter code: N-acetyl-gamma-glutamyl-phosphate reductase (346 aa).

The active site involves cysteine 150.

Belongs to the NAGSA dehydrogenase family. Type 1 subfamily.

Its subcellular location is the cytoplasm. It carries out the reaction N-acetyl-L-glutamate 5-semialdehyde + phosphate + NADP(+) = N-acetyl-L-glutamyl 5-phosphate + NADPH + H(+). The protein operates within amino-acid biosynthesis; L-arginine biosynthesis; N(2)-acetyl-L-ornithine from L-glutamate: step 3/4. Its function is as follows. Catalyzes the NADPH-dependent reduction of N-acetyl-5-glutamyl phosphate to yield N-acetyl-L-glutamate 5-semialdehyde. The chain is N-acetyl-gamma-glutamyl-phosphate reductase from Alkaliphilus metalliredigens (strain QYMF).